We begin with the raw amino-acid sequence, 589 residues long: L-fucose isomerase (589 aa).

Catalysis depends on proton acceptor residues glutamate 340 and aspartate 364. Mn(2+)-binding residues include glutamate 340, aspartate 364, and histidine 527.

Belongs to the L-fucose isomerase family. Mn(2+) serves as cofactor.

It is found in the cytoplasm. The catalysed reaction is L-fucose = L-fuculose. It participates in carbohydrate degradation; L-fucose degradation; L-lactaldehyde and glycerone phosphate from L-fucose: step 1/3. Functionally, converts the aldose L-fucose into the corresponding ketose L-fuculose. The chain is L-fucose isomerase from Haemophilus influenzae (strain PittEE).